The primary structure comprises 479 residues: MSVRVRLAPSPTGNLHIGTARTAVFNWLYARRHGGQFILRIEDTDRERSSPRYTRNILAGLAWLGLDWDEGPIYQSNRIARYQAVVQQLLDQGLAYRCYVSEVELEAMRAAQKAAGKAPRYDNRHRFLTEEQRRAYEAEGRQPVIRFKIEEPLEVSWVDLIRGPITWNTQDLGGDMVIARADGYPLYNLAVVVDDIDMGITHVIRGEDHIGNTPKQILLYRALGHEPPQFAHSPLILNPEGKKLSKRDGATSVAEFQQMGFLPEALKNYLALLSWSPPDGEEIFSLEKAATMFDFDRVNRAAARFDWNKLNWINSQYIKQLSPAELVERLTPFWQAAGFDLGSVPDPTWLEEVACLIAEGIDRLTEAPPLSRFLFQEPLSYSLPALEQLRLPGVAEAMAAMATTLAAAELPQPVSADSLKPLVEEVAKSQGMKKGLLLKSLRAALTGDLQGPDLMASFALLQRRGWALGRLEAVQKVVA.

Positions 9–19 match the 'HIGH' region motif; that stretch reads PSPTGNLHIGT. Positions 243-247 match the 'KMSKS' region motif; sequence KLSKR. Position 246 (lysine 246) interacts with ATP.

This sequence belongs to the class-I aminoacyl-tRNA synthetase family. Glutamate--tRNA ligase type 1 subfamily. In terms of assembly, monomer.

Its subcellular location is the cytoplasm. It catalyses the reaction tRNA(Glu) + L-glutamate + ATP = L-glutamyl-tRNA(Glu) + AMP + diphosphate. Catalyzes the attachment of glutamate to tRNA(Glu) in a two-step reaction: glutamate is first activated by ATP to form Glu-AMP and then transferred to the acceptor end of tRNA(Glu). In Synechococcus sp. (strain JA-3-3Ab) (Cyanobacteria bacterium Yellowstone A-Prime), this protein is Glutamate--tRNA ligase.